Reading from the N-terminus, the 392-residue chain is Iripin-4 (392 aa).

The first 16 residues, 1–16 (MRSLATFMSLLTICWG), serve as a signal peptide directing secretion. Asparagine 104, asparagine 130, and asparagine 265 each carry an N-linked (GlcNAc...) asparagine glycan.

Belongs to the serpin family. As to expression, female salivary gland.

The protein resides in the secreted. In terms of biological role, serpin with unknown function. Weakly inhibits human granzyme B (GZMB). Acts as a substrate for porcine elastase. This chain is Iripin-4, found in Ixodes ricinus (Common tick).